The primary structure comprises 246 residues: 3-oxoacyl-[acyl-carrier-protein] reductase FabG (246 aa).

NADP(+)-binding positions include Asn-62–Val-63 and Asn-89. Ser-141 serves as a coordination point for substrate. Residue Tyr-154 is the Proton acceptor of the active site. NADP(+) is bound by residues Tyr-154–Lys-158 and Ile-187.

The protein belongs to the short-chain dehydrogenases/reductases (SDR) family. In terms of assembly, homotetramer.

It catalyses the reaction a (3R)-hydroxyacyl-[ACP] + NADP(+) = a 3-oxoacyl-[ACP] + NADPH + H(+). It participates in lipid metabolism; fatty acid biosynthesis. Its function is as follows. Catalyzes the NADPH-dependent reduction of beta-ketoacyl-ACP substrates to beta-hydroxyacyl-ACP products, the first reductive step in the elongation cycle of fatty acid biosynthesis. The sequence is that of 3-oxoacyl-[acyl-carrier-protein] reductase FabG (fabG) from Thermotoga maritima (strain ATCC 43589 / DSM 3109 / JCM 10099 / NBRC 100826 / MSB8).